The sequence spans 88 residues: UPF0495 protein DEHA2C16280g (88 aa).

The chain crosses the membrane as a helical span at residues 25–47; sequence YPLFAAMGVAVASGCFFTYRHFA.

It belongs to the UPF0495 family.

It localises to the membrane. This is UPF0495 protein DEHA2C16280g from Debaryomyces hansenii (strain ATCC 36239 / CBS 767 / BCRC 21394 / JCM 1990 / NBRC 0083 / IGC 2968) (Yeast).